A 32-amino-acid chain; its full sequence is Dermaseptin-8 (32 aa).

Gln-32 carries the post-translational modification Glutamine amide.

Expressed by the skin glands.

The protein resides in the secreted. Functionally, antimicrobial peptide, active against the Gram-positive bacterium S.aureus, and the Gram-negative bacteriun E.coli. Has hemolytic activity at 432 uM. This chain is Dermaseptin-8, found in Phyllomedusa tarsius (Brownbelly leaf frog).